The chain runs to 547 residues: MAAKEVLFGNDARVKMLAGVNVLANAVKVTLGPKGRNVVLDKSFGAPLITKDGVSVAKEIELEDKFENMGAQMVKEVASKANDAAGDGTTTATVLAQAIVTEGLKAVAAGMNPMDLKRGIDKAVIAAVAELKNLSQECSDTKAIAQVGTISANSDESIGEIIATAMERVGKEGVITVEEGQALENELDVVEGMQFDRGYLSPYFINKPETGSVELESPFILLVDKKVSNIRELLPILEGLAKTGKPLLIVAEDVEGEALATLVVNNMRGIVKVAAVKAPGFGDRRKAMLQDIAILTGGTVIAEEIGLELEKATLEDLGTAKRVIITKDDTTIIDGNGEETQIKARVAQIKIQAEESTSDYDKEKLQERMAKLAGGVAVIKVGAATEVEMKEKKARVEDALHATRAAVEEGVVAGGGVALVRVASKIGEVEVLNEDQKHGVIIALRAMEAPLRQIATNAGEEGSVVANNVKNGTGNYGYNAGNDTYGDMLEMGILDPTKVTRSALQFASSIAGLMITTECMVADVKEDAADMGGMGGMGGMGGMGGMM.

Residues 30–33 (TLGP), Lys51, 87–91 (DGTTT), Gly415, and Asp495 contribute to the ATP site.

It belongs to the chaperonin (HSP60) family. Forms a cylinder of 14 subunits composed of two heptameric rings stacked back-to-back. Interacts with the co-chaperonin GroES.

It localises to the cytoplasm. The catalysed reaction is ATP + H2O + a folded polypeptide = ADP + phosphate + an unfolded polypeptide.. Its function is as follows. Together with its co-chaperonin GroES, plays an essential role in assisting protein folding. The GroEL-GroES system forms a nano-cage that allows encapsulation of the non-native substrate proteins and provides a physical environment optimized to promote and accelerate protein folding. The sequence is that of Chaperonin GroEL from Shewanella halifaxensis (strain HAW-EB4).